The following is a 316-amino-acid chain: MSGNSSTPNQGINCDPSYSYVMENFKYFVQVAYLAPAVFLYSRILYVVWVQHKKSYGYHPFFMVYSMVGLILVLLDIFITRLFVYVPQLCLPAAQFFISNPFLMELYYPLLNYLHCAQPFIQIFLTTNRMSSVLWPVDHEKFWKINFSRILILNLIAPFFFIWNTIISKKVLIFYFGGFYINYLKIIPWASMSLFLFIIRSAVVMITVVTTSITFWKMSHMKNRLKKSEGTLCKACAANSICFLVPAVFEAMKVLNTDWGKHWLAYLVQPFAWDVLNVGSPLVMIFASGQLRTHAFNIKRPVLKRSNSILVSSMTN.

The next 7 membrane-spanning stretches (helical) occupy residues phenylalanine 28 to valine 48, proline 60 to threonine 80, leucine 106 to threonine 126, phenylalanine 147 to isoleucine 167, isoleucine 186 to isoleucine 206, alanine 235 to leucine 255, and leucine 267 to alanine 287.

It belongs to the nematode receptor-like protein srg family.

The protein resides in the membrane. This is Serpentine receptor class gamma-8 (srg-8) from Caenorhabditis elegans.